Here is a 346-residue protein sequence, read N- to C-terminus: Coproporphyrin III ferrochelatase (346 aa).

Ser52 and Tyr121 together coordinate Fe-coproporphyrin III. Fe(2+) is bound by residues His181 and Glu264.

The protein belongs to the ferrochelatase family.

The protein resides in the cytoplasm. The catalysed reaction is Fe-coproporphyrin III + 2 H(+) = coproporphyrin III + Fe(2+). Its pathway is porphyrin-containing compound metabolism; protoheme biosynthesis. Functionally, involved in coproporphyrin-dependent heme b biosynthesis. Catalyzes the insertion of ferrous iron into coproporphyrin III to form Fe-coproporphyrin III. This chain is Coproporphyrin III ferrochelatase, found in Mycobacterium sp. (strain JLS).